We begin with the raw amino-acid sequence, 245 residues long: tRNA (guanine-N(1)-)-methyltransferase (245 aa).

S-adenosyl-L-methionine is bound by residues Gly-112 and 132–137; that span reads IGDFVL.

The protein belongs to the RNA methyltransferase TrmD family. As to quaternary structure, homodimer.

Its subcellular location is the cytoplasm. The enzyme catalyses guanosine(37) in tRNA + S-adenosyl-L-methionine = N(1)-methylguanosine(37) in tRNA + S-adenosyl-L-homocysteine + H(+). Functionally, specifically methylates guanosine-37 in various tRNAs. The polypeptide is tRNA (guanine-N(1)-)-methyltransferase (Geobacter metallireducens (strain ATCC 53774 / DSM 7210 / GS-15)).